The chain runs to 85 residues: Large ribosomal subunit protein bL27 (85 aa).

The tract at residues 1–21 (MAHKKAGGSTRNGRDSRGKRL) is disordered.

This sequence belongs to the bacterial ribosomal protein bL27 family.

The protein is Large ribosomal subunit protein bL27 of Blochmanniella floridana.